Here is a 400-residue protein sequence, read N- to C-terminus: Tryptophan synthase beta chain (400 aa).

Lysine 91 bears the N6-(pyridoxal phosphate)lysine mark.

The protein belongs to the TrpB family. Tetramer of two alpha and two beta chains. Pyridoxal 5'-phosphate is required as a cofactor.

The catalysed reaction is (1S,2R)-1-C-(indol-3-yl)glycerol 3-phosphate + L-serine = D-glyceraldehyde 3-phosphate + L-tryptophan + H2O. Its pathway is amino-acid biosynthesis; L-tryptophan biosynthesis; L-tryptophan from chorismate: step 5/5. Functionally, the beta subunit is responsible for the synthesis of L-tryptophan from indole and L-serine. This Listeria monocytogenes serotype 4b (strain CLIP80459) protein is Tryptophan synthase beta chain.